A 290-amino-acid chain; its full sequence is 4-diphosphocytidyl-2-C-methyl-D-erythritol kinase (290 aa).

Residue lysine 8 is part of the active site. 89–99 serves as a coordination point for ATP; sequence PIGAGVGGGSS. Aspartate 131 is an active-site residue.

This sequence belongs to the GHMP kinase family. IspE subfamily.

It carries out the reaction 4-CDP-2-C-methyl-D-erythritol + ATP = 4-CDP-2-C-methyl-D-erythritol 2-phosphate + ADP + H(+). It functions in the pathway isoprenoid biosynthesis; isopentenyl diphosphate biosynthesis via DXP pathway; isopentenyl diphosphate from 1-deoxy-D-xylulose 5-phosphate: step 3/6. Its function is as follows. Catalyzes the phosphorylation of the position 2 hydroxy group of 4-diphosphocytidyl-2C-methyl-D-erythritol. This Chlamydia felis (strain Fe/C-56) (Chlamydophila felis) protein is 4-diphosphocytidyl-2-C-methyl-D-erythritol kinase.